A 67-amino-acid polypeptide reads, in one-letter code: DNA-directed RNA polymerase subunit omega (67 aa).

The protein belongs to the RNA polymerase subunit omega family. The RNAP catalytic core consists of 2 alpha, 1 beta, 1 beta' and 1 omega subunit. When a sigma factor is associated with the core the holoenzyme is formed, which can initiate transcription.

The enzyme catalyses RNA(n) + a ribonucleoside 5'-triphosphate = RNA(n+1) + diphosphate. Its function is as follows. Promotes RNA polymerase assembly. Latches the N- and C-terminal regions of the beta' subunit thereby facilitating its interaction with the beta and alpha subunits. This chain is DNA-directed RNA polymerase subunit omega, found in Polaromonas naphthalenivorans (strain CJ2).